The sequence spans 622 residues: Chaperone protein HscA homolog (622 aa).

The protein belongs to the heat shock protein 70 family.

Its function is as follows. Chaperone involved in the maturation of iron-sulfur cluster-containing proteins. Has a low intrinsic ATPase activity which is markedly stimulated by HscB. This Burkholderia pseudomallei (strain 668) protein is Chaperone protein HscA homolog.